The sequence spans 391 residues: Secreted aspartic protease 1 (391 aa).

The first 18 residues, 1 to 18 (MFLKNIFIALAIALLVDA), serve as a signal peptide directing secretion. Residues 19 to 50 (SPAKRSPGFVTLDFDVIKTPVNATGQEGKVKR) constitute a propeptide, activation peptide. Asparagine 40 carries an N-linked (GlcNAc...) asparagine glycan. The Peptidase A1 domain maps to 64 to 377 (YAADITIGSN…DLDDDKISLA (314 aa)). Aspartate 82 is a catalytic residue. Residue 82–84 (DTG) coordinates pepstatin A. Cysteine 97 and cysteine 109 are oxidised to a cystine. Zn(2+) is bound by residues aspartate 241 and aspartate 263. Aspartate 267 is an active-site residue. 267-271 (DSGTT) is a pepstatin A binding site. Residues cysteine 305 and cysteine 343 are joined by a disulfide bond.

It belongs to the peptidase A1 family. As to quaternary structure, monomer.

The protein resides in the secreted. The catalysed reaction is Preferential cleavage at the carboxyl of hydrophobic amino acids, but fails to cleave 15-Leu-|-Tyr-16, 16-Tyr-|-Leu-17 and 24-Phe-|-Phe-25 of insulin B chain. Activates trypsinogen, and degrades keratin.. With respect to regulation, inhibited by pepstatin A analogs and squash aspartic peptidase inhibitor (SQAPI). Secreted aspartic peptidases (SAPs) are a group of ten acidic hydrolases considered as key virulence factors. These enzymes supply the fungus with nutrient amino acids as well as are able to degrade the selected host's proteins involved in the immune defense. Induces host inflammatory cytokine production in a proteolytic activity-independent way. Plays a role in tissue damage during superficial infection. Moreover, acts toward human hemoglobin though limited proteolysis to generate a variety of antimicrobial hemocidins, enabling to compete with the other microorganisms of the same physiological niche using the microbicidal peptides generated from the host protein. In terms of biological role, plays a key role in defense against host by cleaving histatin-5 (Hst 5), a peptide from human saliva that carries out fungicidal activity. The cleavage rate decreases in an order of SAP2 &gt; SAP9 &gt; SAP3 &gt; SAP7 &gt; SAP4 &gt; SAP1 &gt; SAP8. The first cleavage occurs between residues 'Lys-17' and 'His-18' of Hst 5, giving DSHAKRHHGYKRKFHEK and HHSHRGY peptides. Further fragmentation by SAP1 results in AKRHHGYKRKFHEK and AKRHHGY products. The protein is Secreted aspartic protease 1 of Candida albicans (Yeast).